The chain runs to 564 residues: Type 2 DNA topoisomerase 6 subunit B (564 aa).

ATP contacts are provided by residues Asn-46, Asp-78, Thr-99–Lys-100, Gly-109–Ser-116, and Lys-471.

This sequence belongs to the TOP6B family. As to quaternary structure, homodimer. Heterotetramer of two Top6A and two Top6B chains.

The enzyme catalyses ATP-dependent breakage, passage and rejoining of double-stranded DNA.. Its function is as follows. Relaxes both positive and negative superturns and exhibits a strong decatenase activity. This chain is Type 2 DNA topoisomerase 6 subunit B, found in Pyrococcus abyssi (strain GE5 / Orsay).